The primary structure comprises 96 residues: uncharacterized protein (96 aa).

It is found in the mitochondrion. This is an uncharacterized protein from Saccharomyces cerevisiae (strain ATCC 204508 / S288c) (Baker's yeast).